Reading from the N-terminus, the 274-residue chain is Malonyl-[acyl-carrier protein] O-methyltransferase (274 aa).

It belongs to the methyltransferase superfamily.

It carries out the reaction malonyl-[ACP] + S-adenosyl-L-methionine = malonyl-[ACP] methyl ester + S-adenosyl-L-homocysteine. Its pathway is cofactor biosynthesis; biotin biosynthesis. Functionally, converts the free carboxyl group of a malonyl-thioester to its methyl ester by transfer of a methyl group from S-adenosyl-L-methionine (SAM). It allows to synthesize pimeloyl-ACP via the fatty acid synthetic pathway. This is Malonyl-[acyl-carrier protein] O-methyltransferase from Bacteroides helcogenes (strain ATCC 35417 / DSM 20613 / JCM 6297 / CCUG 15421 / P 36-108).